A 425-amino-acid polypeptide reads, in one-letter code: Serine--tRNA ligase (425 aa).

231 to 233 (TAE) contacts L-serine. Residue 262–264 (RSE) participates in ATP binding. Position 285 (Glu-285) interacts with L-serine. 349 to 352 (EISS) contributes to the ATP binding site. Ser-385 lines the L-serine pocket.

It belongs to the class-II aminoacyl-tRNA synthetase family. Type-1 seryl-tRNA synthetase subfamily. As to quaternary structure, homodimer. The tRNA molecule binds across the dimer.

It is found in the cytoplasm. The catalysed reaction is tRNA(Ser) + L-serine + ATP = L-seryl-tRNA(Ser) + AMP + diphosphate + H(+). It carries out the reaction tRNA(Sec) + L-serine + ATP = L-seryl-tRNA(Sec) + AMP + diphosphate + H(+). It functions in the pathway aminoacyl-tRNA biosynthesis; selenocysteinyl-tRNA(Sec) biosynthesis; L-seryl-tRNA(Sec) from L-serine and tRNA(Sec): step 1/1. Its function is as follows. Catalyzes the attachment of serine to tRNA(Ser). Is also able to aminoacylate tRNA(Sec) with serine, to form the misacylated tRNA L-seryl-tRNA(Sec), which will be further converted into selenocysteinyl-tRNA(Sec). This Bartonella tribocorum (strain CIP 105476 / IBS 506) protein is Serine--tRNA ligase.